Reading from the N-terminus, the 96-residue chain is Co-chaperonin GroES (96 aa).

It belongs to the GroES chaperonin family. In terms of assembly, heptamer of 7 subunits arranged in a ring. Interacts with the chaperonin GroEL.

The protein resides in the cytoplasm. Functionally, together with the chaperonin GroEL, plays an essential role in assisting protein folding. The GroEL-GroES system forms a nano-cage that allows encapsulation of the non-native substrate proteins and provides a physical environment optimized to promote and accelerate protein folding. GroES binds to the apical surface of the GroEL ring, thereby capping the opening of the GroEL channel. This Wolbachia pipientis wMel protein is Co-chaperonin GroES.